The chain runs to 450 residues: tRNA-2-methylthio-N(6)-dimethylallyladenosine synthase (450 aa).

An MTTase N-terminal domain is found at 14–132 (GEFFIETWGC…FPNYLNEVKK (119 aa)). 6 residues coordinate [4Fe-4S] cluster: cysteine 23, cysteine 59, cysteine 93, cysteine 169, cysteine 173, and cysteine 176. Positions 155–385 (RKNSMKAFVT…VEVVNEISAK (231 aa)) constitute a Radical SAM core domain. One can recognise a TRAM domain in the interval 388–450 (KAYEGKIEEV…NSFSLTGEEI (63 aa)).

This sequence belongs to the methylthiotransferase family. MiaB subfamily. As to quaternary structure, monomer. Requires [4Fe-4S] cluster as cofactor.

The protein localises to the cytoplasm. The catalysed reaction is N(6)-dimethylallyladenosine(37) in tRNA + (sulfur carrier)-SH + AH2 + 2 S-adenosyl-L-methionine = 2-methylsulfanyl-N(6)-dimethylallyladenosine(37) in tRNA + (sulfur carrier)-H + 5'-deoxyadenosine + L-methionine + A + S-adenosyl-L-homocysteine + 2 H(+). Catalyzes the methylthiolation of N6-(dimethylallyl)adenosine (i(6)A), leading to the formation of 2-methylthio-N6-(dimethylallyl)adenosine (ms(2)i(6)A) at position 37 in tRNAs that read codons beginning with uridine. The protein is tRNA-2-methylthio-N(6)-dimethylallyladenosine synthase of Clostridium botulinum (strain Okra / Type B1).